We begin with the raw amino-acid sequence, 159 residues long: Large ribosomal subunit protein uL10 (159 aa).

Belongs to the universal ribosomal protein uL10 family. As to quaternary structure, part of the ribosomal stalk of the 50S ribosomal subunit. The N-terminus interacts with L11 and the large rRNA to form the base of the stalk. The C-terminus forms an elongated spine to which L12 dimers bind in a sequential fashion forming a multimeric L10(L12)X complex.

In terms of biological role, forms part of the ribosomal stalk, playing a central role in the interaction of the ribosome with GTP-bound translation factors. In Sulfurimonas denitrificans (strain ATCC 33889 / DSM 1251) (Thiomicrospira denitrificans (strain ATCC 33889 / DSM 1251)), this protein is Large ribosomal subunit protein uL10.